The primary structure comprises 406 residues: Tyrosine--tRNA ligase (406 aa).

Tyr-39 lines the L-tyrosine pocket. A 'HIGH' region motif is present at residues 44–53 (PTADSLHVGH). The L-tyrosine site is built by Tyr-172 and Gln-176. Residues 232–236 (KMGKT) carry the 'KMSKS' region motif. Lys-235 contributes to the ATP binding site. The S4 RNA-binding domain maps to 344-404 (KELLDVLVDR…LGKKKFYNIV (61 aa)).

This sequence belongs to the class-I aminoacyl-tRNA synthetase family. TyrS type 1 subfamily. Homodimer.

The protein localises to the cytoplasm. The enzyme catalyses tRNA(Tyr) + L-tyrosine + ATP = L-tyrosyl-tRNA(Tyr) + AMP + diphosphate + H(+). Its function is as follows. Catalyzes the attachment of tyrosine to tRNA(Tyr) in a two-step reaction: tyrosine is first activated by ATP to form Tyr-AMP and then transferred to the acceptor end of tRNA(Tyr). In Fusobacterium nucleatum subsp. nucleatum (strain ATCC 25586 / DSM 15643 / BCRC 10681 / CIP 101130 / JCM 8532 / KCTC 2640 / LMG 13131 / VPI 4355), this protein is Tyrosine--tRNA ligase.